A 204-amino-acid chain; its full sequence is Urease accessory protein UreG (204 aa).

11 to 18 (GPVGAGKT) is a GTP binding site.

It belongs to the SIMIBI class G3E GTPase family. UreG subfamily. As to quaternary structure, homodimer. UreD, UreF and UreG form a complex that acts as a GTP-hydrolysis-dependent molecular chaperone, activating the urease apoprotein by helping to assemble the nickel containing metallocenter of UreC. The UreE protein probably delivers the nickel.

It is found in the cytoplasm. In terms of biological role, facilitates the functional incorporation of the urease nickel metallocenter. This process requires GTP hydrolysis, probably effectuated by UreG. The polypeptide is Urease accessory protein UreG (Staphylococcus epidermidis (strain ATCC 12228 / FDA PCI 1200)).